The sequence spans 592 residues: Aspartate--tRNA ligase (592 aa).

Residue Glu176 participates in L-aspartate binding. An aspartate region spans residues 200-203 (QIFK). Residue Arg222 coordinates L-aspartate. Residues 222–224 (RDE) and Gln231 each bind ATP. Position 450 (His450) interacts with L-aspartate. Glu484 contributes to the ATP binding site. Arg491 is an L-aspartate binding site. ATP is bound at residue 536–539 (GLDR).

This sequence belongs to the class-II aminoacyl-tRNA synthetase family. Type 1 subfamily. Homodimer.

It is found in the cytoplasm. The catalysed reaction is tRNA(Asp) + L-aspartate + ATP = L-aspartyl-tRNA(Asp) + AMP + diphosphate. Its function is as follows. Catalyzes the attachment of L-aspartate to tRNA(Asp) in a two-step reaction: L-aspartate is first activated by ATP to form Asp-AMP and then transferred to the acceptor end of tRNA(Asp). The polypeptide is Aspartate--tRNA ligase (Macrococcus caseolyticus (strain JCSC5402) (Macrococcoides caseolyticum)).